We begin with the raw amino-acid sequence, 62 residues long: Protein DsrB (62 aa).

This sequence belongs to the DsrB family.

This chain is Protein DsrB, found in Escherichia fergusonii (strain ATCC 35469 / DSM 13698 / CCUG 18766 / IAM 14443 / JCM 21226 / LMG 7866 / NBRC 102419 / NCTC 12128 / CDC 0568-73).